We begin with the raw amino-acid sequence, 441 residues long: ACT domain-containing protein ACR8 (441 aa).

4 ACT domains span residues 34–110 (IVKV…NIEV), 115–196 (ALEL…SAAK), 248–324 (VVNV…ALEG), and 326–405 (RLEL…TMYH).

Expressed in roots, leaves, flowers and siliques.

In terms of biological role, may bind amino acids. The polypeptide is ACT domain-containing protein ACR8 (Arabidopsis thaliana (Mouse-ear cress)).